Here is a 33-residue protein sequence, read N- to C-terminus: AVPCGQVSSALSPCMSYLTGGGDDPEARCCAGV.

A disulfide bond links Cys-14 and Cys-29.

This sequence belongs to the plant LTP family. In terms of assembly, dimer.

Its function is as follows. Plant non-specific lipid-transfer proteins transfer phospholipids as well as galactolipids across membranes. May play a role in wax or cutin deposition in the cell walls of expanding epidermal cells and certain secretory tissues. Has antibacterial activity against Gram-positive bacteria S.aureus and S.epidermidis and blocks biofilm formation. In a mouse model, also protects against bacterial sepsis and has an anti-inflammatory effect. Exhibits antinociceptive activity upon oral or intraperitoneal application in mice. This is Non-specific lipid-transfer protein from Morinda citrifolia (Indian mulberry).